Here is a 150-residue protein sequence, read N- to C-terminus: FAD synthase (150 aa).

ATP contacts are provided by residues 11–12 (TF), 16–19 (HPGH), Asp96, and Tyr124.

This sequence belongs to the archaeal FAD synthase family. As to quaternary structure, homodimer. It depends on a divalent metal cation as a cofactor.

It catalyses the reaction FMN + ATP + H(+) = FAD + diphosphate. Its pathway is cofactor biosynthesis; FAD biosynthesis; FAD from FMN: step 1/1. Its function is as follows. Catalyzes the transfer of the AMP portion of ATP to flavin mononucleotide (FMN) to produce flavin adenine dinucleotide (FAD) coenzyme. The chain is FAD synthase from Methanococcus maripaludis (strain C7 / ATCC BAA-1331).